The chain runs to 428 residues: GTPase Obg (428 aa).

The Obg domain maps to 1–158 (MFVDQVQVEV…RFIKLELKVL (158 aa)). Positions 159 to 333 (ADVGLVGFPS…LMHKTAEVLK (175 aa)) constitute an OBG-type G domain. GTP-binding positions include 165–172 (GFPSVGKS), 190–194 (FTTLV), 212–215 (DLPG), 282–285 (TKMD), and 314–316 (SSL). Mg(2+) is bound by residues serine 172 and threonine 192. In terms of domain architecture, OCT spans 350 to 428 (YKYQPEPALK…IDDFTFEFVE (79 aa)).

This sequence belongs to the TRAFAC class OBG-HflX-like GTPase superfamily. OBG GTPase family. In terms of assembly, monomer. It depends on Mg(2+) as a cofactor.

The protein localises to the cytoplasm. In terms of biological role, an essential GTPase which binds GTP, GDP and possibly (p)ppGpp with moderate affinity, with high nucleotide exchange rates and a fairly low GTP hydrolysis rate. Plays a role in control of the cell cycle, stress response, ribosome biogenesis and in those bacteria that undergo differentiation, in morphogenesis control. The polypeptide is GTPase Obg (Lacticaseibacillus casei (strain BL23) (Lactobacillus casei)).